The chain runs to 335 residues: Tetraacyldisaccharide 4'-kinase (335 aa).

58 to 65 (TVGGNGKT) provides a ligand contact to ATP.

This sequence belongs to the LpxK family.

It catalyses the reaction a lipid A disaccharide + ATP = a lipid IVA + ADP + H(+). It participates in glycolipid biosynthesis; lipid IV(A) biosynthesis; lipid IV(A) from (3R)-3-hydroxytetradecanoyl-[acyl-carrier-protein] and UDP-N-acetyl-alpha-D-glucosamine: step 6/6. Transfers the gamma-phosphate of ATP to the 4'-position of a tetraacyldisaccharide 1-phosphate intermediate (termed DS-1-P) to form tetraacyldisaccharide 1,4'-bis-phosphate (lipid IVA). The sequence is that of Tetraacyldisaccharide 4'-kinase from Dichelobacter nodosus (strain VCS1703A).